A 395-amino-acid polypeptide reads, in one-letter code: Terminal nucleotidyltransferase 5B (395 aa).

It belongs to the TENT family.

It localises to the cytoplasm. The protein resides in the nucleus. The catalysed reaction is RNA(n) + ATP = RNA(n)-3'-adenine ribonucleotide + diphosphate. Functionally, catalyzes the transfer of one adenosine molecule from an ATP to an mRNA poly(A) tail bearing a 3'-OH terminal group in an ATP hydrolysis-dependent manner and participates in cytoplasmic polyadenylation. May be involved in maintaining the translation efficiency of at least some genes through preventing degradation of their mRNAs. The polypeptide is Terminal nucleotidyltransferase 5B (Xenopus tropicalis (Western clawed frog)).